The following is a 66-amino-acid chain: COP-associated protein (66 aa).

The 66-residue stretch at 1-66 (MKIDIPVKGM…AILDAGYELG (66 aa)) folds into the HMA domain. Cu cation contacts are provided by Cys12 and Cys15.

Its function is as follows. Part of a cation-transporting system which is associated with copper export out of the H.pylori cells. The polypeptide is COP-associated protein (copP) (Helicobacter felis (strain ATCC 49179 / CCUG 28539 / NCTC 12436 / CS1)).